Reading from the N-terminus, the 206-residue chain is Large ribosomal subunit protein uL4 (206 aa).

The disordered stretch occupies residues 46–77; that stretch reads GTRAQKDREQVRHSTKKPFKQKGTGRARAGMT. Positions 58–70 are enriched in basic residues; the sequence is HSTKKPFKQKGTG.

The protein belongs to the universal ribosomal protein uL4 family. As to quaternary structure, part of the 50S ribosomal subunit.

In terms of biological role, one of the primary rRNA binding proteins, this protein initially binds near the 5'-end of the 23S rRNA. It is important during the early stages of 50S assembly. It makes multiple contacts with different domains of the 23S rRNA in the assembled 50S subunit and ribosome. Functionally, forms part of the polypeptide exit tunnel. The chain is Large ribosomal subunit protein uL4 from Polaromonas naphthalenivorans (strain CJ2).